The chain runs to 152 residues: UPF0266 membrane protein CKO_01158 (152 aa).

The next 3 helical transmembrane spans lie at 6–26 (LVLV…QFIM), 45–65 (VDSV…VTSH), and 67–87 (AQIT…IFWV).

It belongs to the UPF0266 family.

It localises to the cell inner membrane. This is UPF0266 membrane protein CKO_01158 from Citrobacter koseri (strain ATCC BAA-895 / CDC 4225-83 / SGSC4696).